The following is a 561-amino-acid chain: Cytochrome P450 monooxygenase avaL (561 aa).

The chain crosses the membrane as a helical span at residues 19 to 39 (IAASCALVCIVSACYVVWSLL). Cysteine 508 serves as a coordination point for heme.

The protein belongs to the cytochrome P450 family. The cofactor is heme.

The protein resides in the membrane. The protein operates within secondary metabolite biosynthesis. Its function is as follows. Cytochrome P450 monooxygenase; part of the cluster that mediates the biosynthesis of a highly modified cyclo-arginine-tryptophan dipeptide (cRW). The first step of the pathway is perfornmed by the arginine-containing cyclodipeptide synthase (RCPDS) avaA that acts as the scaffold-generating enzyme and is responsible for formation of the cyclo-Arg-Trp (cRW) diketopiperazine. AvaB then acts as a multifunctional flavoenzyme that is responsible for generating the cyclo-Arg-formylkynurenine DKP, which can be deformylated by avaC. AvaB then further catalyzes an additional N-oxidation followed by cyclization and dehydration. The next step is an N-acetylation of the guanidine group catalyzed by the arginine N-acetyltransferase avaD. The roles of the additional enzymes identified within the ava cluster still have to be determined. The chain is Cytochrome P450 monooxygenase avaL from Aspergillus versicolor.